Consider the following 1266-residue polypeptide: 5-oxoprolinase 1 (1266 aa).

It belongs to the oxoprolinase family. In terms of tissue distribution, expressed in roots, stems, leaves, flowers and siliques.

The protein resides in the cytoplasm. It catalyses the reaction 5-oxo-L-proline + ATP + 2 H2O = L-glutamate + ADP + phosphate + H(+). Functionally, catalyzes the cleavage of 5-oxo-L-proline to form L-glutamate coupled to the hydrolysis of ATP to ADP and inorganic phosphate. Acts in the glutathione degradation pathway. This is 5-oxoprolinase 1 from Arabidopsis thaliana (Mouse-ear cress).